Reading from the N-terminus, the 504-residue chain is Anaerobic nitric oxide reductase transcription regulator NorR (504 aa).

4-aspartylphosphate is present on Asp-57. The Sigma-54 factor interaction domain maps to 187–416 (MIGLSPGMTQ…LEHAIHRAVV (230 aa)). ATP contacts are provided by residues 215 to 222 (GETGTGKE) and 278 to 287 (ADNGTLFLDE). Residues 479–498 (WAACARMLETDVANLHRLAK) constitute a DNA-binding region (H-T-H motif).

The protein operates within nitrogen metabolism; nitric oxide reduction. Its function is as follows. Required for the expression of anaerobic nitric oxide (NO) reductase, acts as a transcriptional activator for at least the norVW operon. Activation also requires sigma-54. This is Anaerobic nitric oxide reductase transcription regulator NorR from Shigella flexneri serotype 5b (strain 8401).